The primary structure comprises 138 residues: Bis(5'-nucleosyl)-tetraphosphatase [asymmetrical] (138 aa).

Residues 1-132 enclose the Nudix hydrolase domain; that stretch reads MVVKAAGLVI…EMGSLLRKFS (132 aa). A Nudix box motif is present at residues 37-58; the sequence is GHVDPGEDEWQAAIRETKEEAN.

It belongs to the Nudix hydrolase family. Monomer. It depends on Mg(2+) as a cofactor. The cofactor is Co(2+). Mn(2+) is required as a cofactor. Zn(2+) serves as cofactor. Requires Ca(2+) as cofactor.

It carries out the reaction P(1),P(4)-bis(5'-adenosyl) tetraphosphate + H2O = AMP + ATP + 2 H(+). Functionally, asymmetrically hydrolyzes Ap4A to yield AMP and ATP. The chain is Bis(5'-nucleosyl)-tetraphosphatase [asymmetrical] (ndx-4) from Caenorhabditis elegans.